We begin with the raw amino-acid sequence, 162 residues long: UPF0114 protein Shewmr4_0646 (162 aa).

4 helical membrane passes run I15–F35, L53–V73, K108–V128, and I136–L156.

It belongs to the UPF0114 family.

It localises to the cell membrane. This chain is UPF0114 protein Shewmr4_0646, found in Shewanella sp. (strain MR-4).